The following is an 88-amino-acid chain: Large ribosomal subunit protein bL31B (88 aa).

Belongs to the bacterial ribosomal protein bL31 family. Type B subfamily. In terms of assembly, part of the 50S ribosomal subunit.

This is Large ribosomal subunit protein bL31B from Leuconostoc citreum (strain KM20).